Reading from the N-terminus, the 512-residue chain is Colistin resistance protein EmrB (512 aa).

14 consecutive transmembrane segments (helical) span residues 17-37 (WAIF…IQIV), 55-75 (VTWV…MSSI), 84-104 (VYYT…ALSW), 115-135 (IQGF…YLLF), 144-164 (LVMF…IGGW), 169-189 (FSWH…ATVI), 205-225 (SMDW…EYFL), 234-254 (LADT…MIFF), 280-300 (ITTF…PVFL), 314-334 (VMMV…WLIP), 341-361 (TVFV…HLSI), 376-396 (GIGL…TLPL), 412-432 (IGGA…TAMH), and 486-506 (FNDL…LTIF).

This sequence belongs to the major facilitator superfamily. EmrB family.

Its subcellular location is the cell inner membrane. Its function is as follows. Probably part of an efflux pump system that contributes to adaptation to osmotic stress and resistance to colistin. In Acinetobacter baumannii (strain ATCC 17978 / DSM 105126 / CIP 53.77 / LMG 1025 / NCDC KC755 / 5377), this protein is Colistin resistance protein EmrB.